Consider the following 204-residue polypeptide: Copper-binding protein CutI (204 aa).

The N-terminal stretch at 1–26 is a signal peptide; it reads MLKKIALTLCPAIVGSLLFFTAPASA. Cu(2+) is bound by residues histidine 27 and glutamate 50. Residues 27–178 are Extracellular-facing; the sequence is HVSVKPAESA…DDSENSGSSA (152 aa). A disordered region spans residues 146-176; sequence PHSITNITSAKQVTDEHGATKTEDDSENSGS. A compositionally biased stretch (polar residues) spans 147-157; it reads HSITNITSAKQ. Residues 158 to 168 are compositionally biased toward basic and acidic residues; the sequence is VTDEHGATKTE. A helical transmembrane segment spans residues 179–199; that stretch reads LDITAMVLSAAAIILSVAALV. Topologically, residues 200 to 204 are cytoplasmic; that stretch reads KKKRA.

The protein localises to the cell membrane. Its function is as follows. Copper-binding protein that probably plays a role in copper homeostasis. May act as metallochaperone, possibly to facilitate copper uptake via the CutJ/YcnJ importer. Preferentially binds Cu in its oxidized Cu(II) state in a 1:1 stoichiometry. The chain is Copper-binding protein CutI from Bacillus subtilis (strain 168).